Reading from the N-terminus, the 454-residue chain is Asparagine--tRNA ligase (454 aa).

It belongs to the class-II aminoacyl-tRNA synthetase family. As to quaternary structure, homodimer.

It is found in the cytoplasm. The enzyme catalyses tRNA(Asn) + L-asparagine + ATP = L-asparaginyl-tRNA(Asn) + AMP + diphosphate + H(+). This chain is Asparagine--tRNA ligase, found in Microcystis aeruginosa (strain NIES-843 / IAM M-2473).